A 191-amino-acid chain; its full sequence is MEVPSEIIQKLDILQNLIKKWNKSINLISDNTIPNFWQRHILDSLQLMQYISNKEIHLVDIGSGAGFPGIVLSIAGVAKVSLIEADLRKCIFLEKASKISNNSIQIINQRIEKIEIDCNILTCRAFSNLNTIFNCTQNISVREKFLLLKGKNYLTEIVKAKEKWLFDYLIHQSITCRSGKILEVNNLTKII.

Residues Gly-62, Phe-67, 111 to 112, and Arg-124 contribute to the S-adenosyl-L-methionine site; that span reads IE.

Belongs to the methyltransferase superfamily. RNA methyltransferase RsmG family.

The protein localises to the cytoplasm. The enzyme catalyses guanosine(527) in 16S rRNA + S-adenosyl-L-methionine = N(7)-methylguanosine(527) in 16S rRNA + S-adenosyl-L-homocysteine. Functionally, specifically methylates the N7 position of guanine in position 527 of 16S rRNA. This chain is Ribosomal RNA small subunit methyltransferase G, found in Rickettsia typhi (strain ATCC VR-144 / Wilmington).